The following is a 213-amino-acid chain: Putative cytochrome c-type biogenesis protein HI_1454 (213 aa).

6 consecutive transmembrane segments (helical) span residues 15 to 35, 46 to 66, 77 to 97, 118 to 138, 154 to 174, and 192 to 212; these read GLAS…FGIL, FLFI…FGFL, IIAG…FKIG, AFVL…PILA, ASMM…FSFF, and FKIG…TNNF.

The protein belongs to the DsbD family.

It localises to the cell membrane. Its function is as follows. Could be involved in cytochrome c synthesis. The chain is Putative cytochrome c-type biogenesis protein HI_1454 from Haemophilus influenzae (strain ATCC 51907 / DSM 11121 / KW20 / Rd).